The primary structure comprises 753 residues: 5-methyltetrahydropteroyltriglutamate--homocysteine methyltransferase (753 aa).

5-methyltetrahydropteroyltri-L-glutamate contacts are provided by residues R17 to K20 and K117. L-homocysteine is bound by residues I431–S433 and E484. L-methionine contacts are provided by residues I431 to S433 and E484. 5-methyltetrahydropteroyltri-L-glutamate is bound by residues R515–C516 and W561. D599 is an L-homocysteine binding site. Residue D599 participates in L-methionine binding. A 5-methyltetrahydropteroyltri-L-glutamate-binding site is contributed by E605. Positions 641, 643, and 665 each coordinate Zn(2+). Residue H694 is the Proton donor of the active site. Position 726 (C726) interacts with Zn(2+).

It belongs to the vitamin-B12 independent methionine synthase family. The cofactor is Zn(2+).

The catalysed reaction is 5-methyltetrahydropteroyltri-L-glutamate + L-homocysteine = tetrahydropteroyltri-L-glutamate + L-methionine. It participates in amino-acid biosynthesis; L-methionine biosynthesis via de novo pathway; L-methionine from L-homocysteine (MetE route): step 1/1. In terms of biological role, catalyzes the transfer of a methyl group from 5-methyltetrahydrofolate to homocysteine resulting in methionine formation. The sequence is that of 5-methyltetrahydropteroyltriglutamate--homocysteine methyltransferase from Escherichia coli O157:H7 (strain EC4115 / EHEC).